A 178-amino-acid polypeptide reads, in one-letter code: MTKKEQALIEQYAKSLVQVCQERDTLEALQADVLAILEVFKATNLAKTLSSLAVPRAKRLELVRQLQGDNIVYLNNLLEVMLQNEREAYLYQVLLRVLSELASVSNQYDVTVTSAVPLSEEQKQRVRTVVSKRLAVKTGRLIEKVDPSLIGGFMISVNNKVIDTSIRRQLQAFKMNLK.

It belongs to the ATPase delta chain family. As to quaternary structure, F-type ATPases have 2 components, F(1) - the catalytic core - and F(0) - the membrane proton channel. F(1) has five subunits: alpha(3), beta(3), gamma(1), delta(1), epsilon(1). F(0) has three main subunits: a(1), b(2) and c(10-14). The alpha and beta chains form an alternating ring which encloses part of the gamma chain. F(1) is attached to F(0) by a central stalk formed by the gamma and epsilon chains, while a peripheral stalk is formed by the delta and b chains.

Its subcellular location is the cell membrane. F(1)F(0) ATP synthase produces ATP from ADP in the presence of a proton or sodium gradient. F-type ATPases consist of two structural domains, F(1) containing the extramembraneous catalytic core and F(0) containing the membrane proton channel, linked together by a central stalk and a peripheral stalk. During catalysis, ATP synthesis in the catalytic domain of F(1) is coupled via a rotary mechanism of the central stalk subunits to proton translocation. Its function is as follows. This protein is part of the stalk that links CF(0) to CF(1). It either transmits conformational changes from CF(0) to CF(1) or is implicated in proton conduction. This Streptococcus equi subsp. zooepidemicus (strain H70) protein is ATP synthase subunit delta.